Here is a 150-residue protein sequence, read N- to C-terminus: Small ribosomal subunit protein bS6 (150 aa).

The disordered stretch occupies residues 99 to 150; sequence GPSAMLQKRDRDDRGERGERGFGGGGFGGGRDREDRPRRGRDREEAATEETF. 2 stretches are compositionally biased toward basic and acidic residues: residues 105 to 118 and 128 to 144; these read QKRD…RGER and GRDR…REEA.

Belongs to the bacterial ribosomal protein bS6 family.

Functionally, binds together with bS18 to 16S ribosomal RNA. The polypeptide is Small ribosomal subunit protein bS6 (Azorhizobium caulinodans (strain ATCC 43989 / DSM 5975 / JCM 20966 / LMG 6465 / NBRC 14845 / NCIMB 13405 / ORS 571)).